Here is a 342-residue protein sequence, read N- to C-terminus: Tetraacyldisaccharide 4'-kinase (342 aa).

Position 68 to 75 (68 to 75 (TVGGTGKT)) interacts with ATP.

This sequence belongs to the LpxK family.

The catalysed reaction is a lipid A disaccharide + ATP = a lipid IVA + ADP + H(+). It functions in the pathway glycolipid biosynthesis; lipid IV(A) biosynthesis; lipid IV(A) from (3R)-3-hydroxytetradecanoyl-[acyl-carrier-protein] and UDP-N-acetyl-alpha-D-glucosamine: step 6/6. Transfers the gamma-phosphate of ATP to the 4'-position of a tetraacyldisaccharide 1-phosphate intermediate (termed DS-1-P) to form tetraacyldisaccharide 1,4'-bis-phosphate (lipid IVA). The polypeptide is Tetraacyldisaccharide 4'-kinase (Burkholderia ambifaria (strain ATCC BAA-244 / DSM 16087 / CCUG 44356 / LMG 19182 / AMMD) (Burkholderia cepacia (strain AMMD))).